A 342-amino-acid chain; its full sequence is MATH domain and coiled-coil domain-containing protein At3g44800 (342 aa).

The 127-residue stretch at Y3 to V129 folds into the MATH domain. Residues K253–V327 adopt a coiled-coil conformation.

The chain is MATH domain and coiled-coil domain-containing protein At3g44800 from Arabidopsis thaliana (Mouse-ear cress).